The sequence spans 155 residues: UPF0305 protein MTH_811 (155 aa).

The protein belongs to the UPF0305 family.

In Methanothermobacter thermautotrophicus (strain ATCC 29096 / DSM 1053 / JCM 10044 / NBRC 100330 / Delta H) (Methanobacterium thermoautotrophicum), this protein is UPF0305 protein MTH_811.